We begin with the raw amino-acid sequence, 542 residues long: Probable cysteine proteinase 361L (542 aa).

Catalysis depends on residues Cys-172, His-382, and Asn-414. The chain crosses the membrane as a helical span at residues 520-540; sequence TNNWYIYALIIIFILIIFFVL.

The protein belongs to the peptidase C1 family.

Its subcellular location is the membrane. In terms of biological role, probable cysteine protease. The sequence is that of Probable cysteine proteinase 361L from Acheta domesticus (House cricket).